The chain runs to 334 residues: Anthranilate phosphoribosyltransferase (334 aa).

5-phospho-alpha-D-ribose 1-diphosphate is bound by residues Gly-79, Gly-82–Asp-83, Ser-87, Asn-89–Thr-92, Lys-107–Ser-115, and Ser-119. Gly-79 is a binding site for anthranilate. Position 91 (Ser-91) interacts with Mg(2+). An anthranilate-binding site is contributed by Asn-110. Arg-165 is an anthranilate binding site. Residues Asp-224 and Glu-225 each coordinate Mg(2+).

This sequence belongs to the anthranilate phosphoribosyltransferase family. Homodimer. Requires Mg(2+) as cofactor.

It carries out the reaction N-(5-phospho-beta-D-ribosyl)anthranilate + diphosphate = 5-phospho-alpha-D-ribose 1-diphosphate + anthranilate. The protein operates within amino-acid biosynthesis; L-tryptophan biosynthesis; L-tryptophan from chorismate: step 2/5. Functionally, catalyzes the transfer of the phosphoribosyl group of 5-phosphorylribose-1-pyrophosphate (PRPP) to anthranilate to yield N-(5'-phosphoribosyl)-anthranilate (PRA). This is Anthranilate phosphoribosyltransferase from Streptococcus pneumoniae (strain ATCC 700669 / Spain 23F-1).